The following is a 20-amino-acid chain: Toxin TpF21-Cocle (20 aa).

Positions 1 to 20 (KDGYLVGNDGCKYSCNTYPK) constitute an LCN-type CS-alpha/beta domain.

Belongs to the long (4 C-C) scorpion toxin superfamily. Sodium channel inhibitor family. Beta subfamily. Expressed by the venom gland.

It is found in the secreted. In terms of biological role, beta toxins bind voltage-independently at site-4 of sodium channels (Nav) and shift the voltage of activation toward more negative potentials thereby affecting sodium channel activation and promoting spontaneous and repetitive firing. The protein is Toxin TpF21-Cocle of Tityus pachyurus (Colombian scorpion).